The sequence spans 624 residues: Chaperone protein HtpG (624 aa).

The tract at residues 1-336 (MKGQETRGFQ…SSDLPLNVSR (336 aa)) is a; substrate-binding. A b region spans residues 337–552 (EILQDSTVTR…ADEMSTQMAK (216 aa)). Residues 553–624 (LFAAAGQKVP…IRRMNQLLVS (72 aa)) form a c region.

The protein belongs to the heat shock protein 90 family. In terms of assembly, homodimer.

The protein localises to the cytoplasm. Molecular chaperone. Has ATPase activity. The polypeptide is Chaperone protein HtpG (Shigella boydii serotype 4 (strain Sb227)).